A 347-amino-acid chain; its full sequence is Biotin synthase (347 aa).

In terms of domain architecture, Radical SAM core spans 40–258 (AQVQVSTLLS…IAVARIVMPR (219 aa)). [4Fe-4S] cluster is bound by residues cysteine 55, cysteine 59, and cysteine 62. [2Fe-2S] cluster contacts are provided by cysteine 99, cysteine 130, cysteine 190, and arginine 262.

The protein belongs to the radical SAM superfamily. Biotin synthase family. Homodimer. It depends on [4Fe-4S] cluster as a cofactor. [2Fe-2S] cluster serves as cofactor.

The catalysed reaction is (4R,5S)-dethiobiotin + (sulfur carrier)-SH + 2 reduced [2Fe-2S]-[ferredoxin] + 2 S-adenosyl-L-methionine = (sulfur carrier)-H + biotin + 2 5'-deoxyadenosine + 2 L-methionine + 2 oxidized [2Fe-2S]-[ferredoxin]. The protein operates within cofactor biosynthesis; biotin biosynthesis; biotin from 7,8-diaminononanoate: step 2/2. Catalyzes the conversion of dethiobiotin (DTB) to biotin by the insertion of a sulfur atom into dethiobiotin via a radical-based mechanism. The polypeptide is Biotin synthase (Stenotrophomonas maltophilia (strain R551-3)).